Here is a 249-residue protein sequence, read N- to C-terminus: MPFEIVFEGAKEFAQLIDTASKLIDEAAFKVTEDGISMRAMDPSRVVLIDLNLPSSIFSKYEVVEPETIGVNMDHLKKILKRGKAKDTLILKKGEENFLEITIQGTATRTFRVPLIDVEEMEVDLPELPFTAKVVVLGEVLKDAVKDASLVSDSIKFIARENEFIMKAEGETQEVEIKLTLEDEGLLDIEVQEETKSAYGVSYLSDMVKGLGKADEVTIKFGNEMPMQMEYYIRDEGRLTFLLAPRVEE.

This sequence belongs to the PCNA family. As to quaternary structure, homotrimer which circularizes head-to-tail (head is a N-terminus, tail is at C-terminus) to form a toroid. RFC opens the toroid so it can load on DNA. Interacts with both Pol I (pol) and Pol II (polB-polC), with Hel308 (hjm) and with Hjc. Interaction with the C-terminal PIP-box of RfcL may stabilize the toroidal structure.

Sliding clamp subunit that acts as a moving platform for DNA processing. Responsible for tethering the catalytic subunit of DNA polymerase to DNA during high-speed replication. Unlike its eukaryotic paralog, loads on circular DNA without the replication factor C (RFC) clamp loader, although RFC greatly increases loading efficiency. Stimulates the ATPase activity of replication factor C (RFC) in the presence of ssDNA. Stimulates the helicase activity of Hel308 and may alter its substrate specificity. The chain is DNA polymerase sliding clamp from Pyrococcus furiosus (strain ATCC 43587 / DSM 3638 / JCM 8422 / Vc1).